A 116-amino-acid polypeptide reads, in one-letter code: Calcium-regulated OB-fold protein CarO (116 aa).

The first 21 residues, 1 to 21 (MKLRHLPLIAAIGLFSTVTLA), serve as a signal peptide directing secretion.

It is found in the periplasm. In terms of biological role, plays a role in intracellular Ca(2+) homeostasis. Involved in cell protection against oxidative stress in strain 25W. This chain is Calcium-regulated OB-fold protein CarO, found in Pseudomonas aeruginosa (strain ATCC 15692 / DSM 22644 / CIP 104116 / JCM 14847 / LMG 12228 / 1C / PRS 101 / PAO1).